A 273-amino-acid chain; its full sequence is Dermonecrotic toxin LdSicTox-alphaIB3ai (273 aa).

H5 is an active-site residue. Residues E25 and D27 each coordinate Mg(2+). The active-site Nucleophile is H41. Cystine bridges form between C45/C51 and C47/C190. Residue D85 coordinates Mg(2+).

This sequence belongs to the arthropod phospholipase D family. Class II subfamily. It depends on Mg(2+) as a cofactor. As to expression, expressed by the venom gland.

It localises to the secreted. It carries out the reaction an N-(acyl)-sphingosylphosphocholine = an N-(acyl)-sphingosyl-1,3-cyclic phosphate + choline. The enzyme catalyses an N-(acyl)-sphingosylphosphoethanolamine = an N-(acyl)-sphingosyl-1,3-cyclic phosphate + ethanolamine. The catalysed reaction is a 1-acyl-sn-glycero-3-phosphocholine = a 1-acyl-sn-glycero-2,3-cyclic phosphate + choline. It catalyses the reaction a 1-acyl-sn-glycero-3-phosphoethanolamine = a 1-acyl-sn-glycero-2,3-cyclic phosphate + ethanolamine. Functionally, dermonecrotic toxins cleave the phosphodiester linkage between the phosphate and headgroup of certain phospholipids (sphingolipid and lysolipid substrates), forming an alcohol (often choline) and a cyclic phosphate. This toxin acts on sphingomyelin (SM). It may also act on ceramide phosphoethanolamine (CPE), lysophosphatidylcholine (LPC) and lysophosphatidylethanolamine (LPE), but not on lysophosphatidylserine (LPS), and lysophosphatidylglycerol (LPG). It acts by transphosphatidylation, releasing exclusively cyclic phosphate products as second products. Induces dermonecrosis, hemolysis, increased vascular permeability, edema, inflammatory response, and platelet aggregation. In Loxosceles deserta (Desert recluse spider), this protein is Dermonecrotic toxin LdSicTox-alphaIB3ai.